Here is a 57-residue protein sequence, read N- to C-terminus: Small hydrophobic protein (57 aa).

Residues 1–8 (MPAIQPPL) lie on the Virion surface side of the membrane. A helical membrane pass occupies residues 9 to 29 (YLTFLLLILLYLIITLYVWTI). Residues 30–57 (LTINHKTAVRYAALYQRSCSRWGFDQSL) are Intravirion-facing.

Belongs to the rubulavirus small hydrophobic protein family. Interacts with host TNFRSF1A, RIPK1 and IRAK1; these interactions interfere with host NF-kappa-B activation at the level of receptor complexes. Interacts with host protein UBQLN4.

It localises to the virion membrane. The protein resides in the host cell membrane. In terms of biological role, plays a role in the inhibition of the host NF-kappa-B pathway. This inhibition occurs at the receptor level, by preventing the signaling of TNFR1 as well as IL-1R and TLR3. The sequence is that of Small hydrophobic protein (SH) from Mumps virus (strain Enders) (MuV).